The sequence spans 206 residues: Large ribosomal subunit protein eL8 (206 aa).

The protein belongs to the eukaryotic ribosomal protein eL8 family. As to quaternary structure, component of the large ribosomal subunit.

It is found in the cytoplasm. The protein is Large ribosomal subunit protein eL8 (RPL7A) of Encephalitozoon cuniculi (strain GB-M1) (Microsporidian parasite).